The following is a 436-amino-acid chain: C4-dicarboxylate transport protein 2 (436 aa).

9 consecutive transmembrane segments (helical) span residues 14-34 (VLVAIAIGIALGHWYPETAVA), 45-65 (LIKMAIAPIIFCTVVTGIAGM), 77-97 (MALLYFEIVSTVALIIGLVVV), 142-162 (VVGAFANGDILQVLFFSVLFG), 198-218 (PIGAFGAMAFTIGAYGVGSLV), 223-243 (LMLCFYITCLLFVLIVLGGIA), 290-310 (VVGLVIPTGYSFNLDGTSIYL), 331-351 (ITLLLVLLIASKGAAGVTGSG), and 353-373 (IVLAATLSAVGHLPVAGLALI). A disordered region spans residues 414–436 (ELAGEGNASSPASDIPVGGREAV).

This sequence belongs to the dicarboxylate/amino acid:cation symporter (DAACS) (TC 2.A.23) family.

Its subcellular location is the cell inner membrane. In terms of biological role, responsible for the transport of dicarboxylates such as succinate, fumarate, and malate from the periplasm across the membrane. This Pseudomonas paraeruginosa (strain DSM 24068 / PA7) (Pseudomonas aeruginosa (strain PA7)) protein is C4-dicarboxylate transport protein 2.